A 336-amino-acid chain; its full sequence is Galectin-12 (336 aa).

Galectin domains follow at residues 49-183 (YVTT…VGFL) and 212-336 (CSHA…CVHS).

As to expression, not widely expressed. Predominantly expressed in adipose tissue.

Its subcellular location is the nucleus. Binds lactose. May participate in the apoptosis of adipocytes. This is Galectin-12 (LGALS12) from Homo sapiens (Human).